We begin with the raw amino-acid sequence, 127 residues long: Large ribosomal subunit protein bL17 (127 aa).

Belongs to the bacterial ribosomal protein bL17 family. As to quaternary structure, part of the 50S ribosomal subunit. Contacts protein L32.

The polypeptide is Large ribosomal subunit protein bL17 (Enterococcus faecalis (strain ATCC 700802 / V583)).